The following is a 296-amino-acid chain: UBX domain-containing protein 1-A (296 aa).

Positions 1–42 constitute a UBA domain; that stretch reads MAECSTLESLIEMGFSSTRAEKALTATGNQGIEPAMDWLVEH. The interval 43–216 is disordered; sequence EDDPDIDEPS…VQEPPTKKEY (174 aa). Residues 61 to 75 show a composition bias toward low complexity; that stretch reads TDTADTTDTTDTTDT. Composition is skewed to basic and acidic residues over residues 86-100, 107-123, and 138-178; these read PLTE…KRMM, QNER…EQEK, and KMQE…DRAR. A coiled-coil region spans residues 87-177; that stretch reads LTEEEKEKQT…KIARDKADRA (91 aa). A compositionally biased stretch (low complexity) spans 191 to 206; the sequence is PAETSIPATTPSPSSP. Positions 214–293 constitute a UBX domain; sequence KEYDQCRIQV…GLVPTAVLIV (80 aa).

It localises to the cytoplasm. Functionally, component of a complex required to couple deglycosylation and proteasome-mediated degradation of misfolded proteins in the endoplasmic reticulum that are retrotranslocated in the cytosol. Involved in ubiquitin-proteasome systems. In Xenopus laevis (African clawed frog), this protein is UBX domain-containing protein 1-A (ubxn1-a).